Here is a 173-residue protein sequence, read N- to C-terminus: Ribosome maturation factor RimM (173 aa).

Residues 92 to 165 (EGEFYHADLI…RVVIEMPGEI (74 aa)) enclose the PRC barrel domain.

The protein belongs to the RimM family. As to quaternary structure, binds ribosomal protein uS19.

It is found in the cytoplasm. In terms of biological role, an accessory protein needed during the final step in the assembly of 30S ribosomal subunit, possibly for assembly of the head region. Essential for efficient processing of 16S rRNA. May be needed both before and after RbfA during the maturation of 16S rRNA. It has affinity for free ribosomal 30S subunits but not for 70S ribosomes. The polypeptide is Ribosome maturation factor RimM (Nitrobacter hamburgensis (strain DSM 10229 / NCIMB 13809 / X14)).